Reading from the N-terminus, the 295-residue chain is 33 kDa chaperonin (295 aa).

Cystine bridges form between C237-C239 and C270-C273.

Belongs to the HSP33 family. Post-translationally, under oxidizing conditions two disulfide bonds are formed involving the reactive cysteines. Under reducing conditions zinc is bound to the reactive cysteines and the protein is inactive.

The protein resides in the cytoplasm. Functionally, redox regulated molecular chaperone. Protects both thermally unfolding and oxidatively damaged proteins from irreversible aggregation. Plays an important role in the bacterial defense system toward oxidative stress. The protein is 33 kDa chaperonin of Geobacillus sp. (strain WCH70).